A 449-amino-acid chain; its full sequence is Packaging protein 1 (449 aa).

The segment at 1–78 is disordered; that stretch reads METRGRRPAA…PAKRGDMLDR (78 aa). 171–178 provides a ligand contact to ATP; the sequence is GPTGCGKS. The segment at 440–449 is DNA-binding; the sequence is RAYRARKTPK.

Belongs to the adenoviridae packaging protein 1 family. As to quaternary structure, homodimer. Part of a genome packaging complex composed of packaging proteins 1, 2 and 3; this complex specifically binds to the packaging sequence on the left end of viral genomic DNA and performs packaging of the viral genome. Interacts with protein 33K.

It is found in the virion. The protein localises to the host nucleus. Its subcellular location is the host nucleoplasm. The protein resides in the host nucleolus. Component of the packaging machinery which encapsidates the viral DNA into preformed capsids and transcriptional activator of the viral major late promoter (MLP). Binds, along with packaging proteins 2 and 3, to the specific packaging sequence on the left end of viral genomic DNA and displays ATPase activity thereby providing the power stroke of the packaging machinery. The activity of packaging protein IVa2 is stimulated by protein 33K which acts as a terminase. May be the protein that pumps DNA into the capsid powered by ATP hydrolysis. Specifically binds to the 5'-CG-3' nucleotides of the repeats making up the packaging sequence. Component of the DEF-A and DEF-B transcription factors that bind downstream elements of the major late promoter (MLP), and stimulate transcription from the MLP after initiation of viral DNA replication. DEF-A is a heterodimer packaging proteins 1 and 2 and DEF-B is a homodimer of packaging protein 1. This chain is Packaging protein 1, found in Human adenovirus C serotype 5 (HAdV-5).